Consider the following 518-residue polypeptide: Protein nucleotidyltransferase YdiU (518 aa).

ATP-binding residues include G109, G111, R112, K131, D143, G144, R194, and R201. D270 serves as the catalytic Proton acceptor. N271 and D280 together coordinate Mg(2+). D280 provides a ligand contact to ATP.

This sequence belongs to the SELO family. Mg(2+) is required as a cofactor. The cofactor is Mn(2+).

The enzyme catalyses L-seryl-[protein] + ATP = 3-O-(5'-adenylyl)-L-seryl-[protein] + diphosphate. It carries out the reaction L-threonyl-[protein] + ATP = 3-O-(5'-adenylyl)-L-threonyl-[protein] + diphosphate. The catalysed reaction is L-tyrosyl-[protein] + ATP = O-(5'-adenylyl)-L-tyrosyl-[protein] + diphosphate. It catalyses the reaction L-histidyl-[protein] + UTP = N(tele)-(5'-uridylyl)-L-histidyl-[protein] + diphosphate. The enzyme catalyses L-seryl-[protein] + UTP = O-(5'-uridylyl)-L-seryl-[protein] + diphosphate. It carries out the reaction L-tyrosyl-[protein] + UTP = O-(5'-uridylyl)-L-tyrosyl-[protein] + diphosphate. In terms of biological role, nucleotidyltransferase involved in the post-translational modification of proteins. It can catalyze the addition of adenosine monophosphate (AMP) or uridine monophosphate (UMP) to a protein, resulting in modifications known as AMPylation and UMPylation. This chain is Protein nucleotidyltransferase YdiU, found in Paraburkholderia xenovorans (strain LB400).